We begin with the raw amino-acid sequence, 784 residues long: DNA repair and recombination protein RAD54-like (784 aa).

Residues 1-54 (MRRSLAPSQRGPMRPESRHSFTPPLLKKNKRSCQQELEREQELDRKRQSALRDA) form a disordered region. A required for chromatin remodeling, strand pairing activities and coupling of ATPase activity region spans residues 2-9 (RRSLAPSQ). Serine 20 is modified (phosphoserine). Threonine 22 is subject to Phosphothreonine. A compositionally biased stretch (basic and acidic residues) spans 36-47 (ELEREQELDRKR). The Helicase ATP-binding domain occupies 172–346 (EGKRGNFNGC…YSLVNFVNPE (175 aa)). 185–192 (DEMGLGKT) contributes to the ATP binding site. Residues 297–300 (DEGH) carry the DEGH box motif. Positions 503 to 660 (LLDFMLAAIR…NNESAEKHFT (158 aa)) constitute a Helicase C-terminal domain. The disordered stretch occupies residues 751–784 (EEAASEQPEEKPDRRKRPSTPPSDDSADEDFLGF). Acidic residues predominate over residues 775 to 784 (DSADEDFLGF).

The protein belongs to the SNF2/RAD54 helicase family. As to quaternary structure, interacts (via N-terminus) with spn-A/Rad51.

Its subcellular location is the nucleus. In terms of biological role, involved in mitotic DNA repair and meiotic recombination. Functions in the recombinational DNA repair pathway. Essential for interhomolog gene conversion (GC), but may have a less important role in intersister GC than spn-A/Rad51. In the presence of DNA, spn-A/Rad51 enhances the ATPase activity of okr/Rad54. The chain is DNA repair and recombination protein RAD54-like from Drosophila yakuba (Fruit fly).